The sequence spans 462 residues: Argininosuccinate lyase (462 aa).

It belongs to the lyase 1 family. Argininosuccinate lyase subfamily.

It is found in the cytoplasm. The enzyme catalyses 2-(N(omega)-L-arginino)succinate = fumarate + L-arginine. The protein operates within amino-acid biosynthesis; L-arginine biosynthesis; L-arginine from L-ornithine and carbamoyl phosphate: step 3/3. The chain is Argininosuccinate lyase from Prochlorococcus marinus (strain SARG / CCMP1375 / SS120).